A 360-amino-acid chain; its full sequence is DNA ADP-ribosyl glycohydrolase (360 aa).

One can recognise a Macro domain in the interval 1–155 (MLRFVRGNLL…VYEPVENPKA (155 aa)). Residues 8-9 (NL), 20-22 (TVN), 31-34 (VALQ), and T79 each bind ADP-D-ribose. K80 (nucleophile) is an active-site residue. 117–121 (GAGNG) contributes to the ADP-D-ribose binding site. Positions 167 to 338 (LTPARAALLK…VALDALLKRG (172 aa)) are interaction with DarT.

This sequence belongs to the DarG ADP-ribosyl glycohydrolase family. Interacts (via C-terminus) with cognate toxin DarT; this heterodimeric complex neutralizes the toxic effect of DarT by preventing ssDNA binding to DarT and consequently inactivating the toxin by direct protein-protein interactions.

The catalysed reaction is an N-(ADP-alpha-D-ribosyl)-thymidine in DNA + H2O = a thymidine in DNA + ADP-D-ribose. Its function is as follows. Antitoxin component of the hybrid type II/IV toxin-antitoxin (TA) system DarTG, which plays a crucial role in controlling bacterial growth and bacteriophage infection. De-ADP-ribosylates DNA modified on thymidine by its cognate toxin DarT, which neutralizes the activity of cognate toxin DarT. Upon expression in E.coli neutralizes the effect of cognate toxin DarT. Upon expression in M.tuberculosis neutralizes the toxic effects of endogenous DarT. The polypeptide is DNA ADP-ribosyl glycohydrolase (Thermus aquaticus (strain ATCC BAA-2747 / Y51MC23)).